The chain runs to 906 residues: Protein transport protein SEC24-2 (906 aa).

Positions 222, 225, 244, and 247 each coordinate Zn(2+). The tract at residues 222-247 is zinc finger-like; that stretch reads CRRCRSYMNPFVTFIEQGRRWRCNFC.

Belongs to the SEC23/SEC24 family. SEC24 subfamily. In terms of assembly, the COPII coat is composed of at least 5 proteins: the SEC23/24 complex, the SEC13/31 complex, and the protein SAR1. Golgi apparatus membrane; Peripheral membrane protein; Cytoplasmic side.

It localises to the cytoplasm. Its subcellular location is the cytoplasmic vesicle. It is found in the COPII-coated vesicle membrane. The protein localises to the endoplasmic reticulum membrane. The protein resides in the golgi apparatus membrane. Component of the coat protein complex II (COPII) which promotes the formation of transport vesicles from the endoplasmic reticulum (ER). The coat has two main functions, the physical deformation of the endoplasmic reticulum membrane into vesicles and the selection of cargo molecules. The polypeptide is Protein transport protein SEC24-2 (SEC242) (Candida glabrata (strain ATCC 2001 / BCRC 20586 / JCM 3761 / NBRC 0622 / NRRL Y-65 / CBS 138) (Yeast)).